The following is a 415-amino-acid chain: Adipocyte plasma membrane-associated protein (415 aa).

The disordered stretch occupies residues 1–29 (MSEADGLRQRRPLRPQVVTDDGQVPEVKE). S2 bears the N-acetylserine mark. Residues 2–39 (SEADGLRQRRPLRPQVVTDDGQVPEVKEGSSFSGRVFR) are Cytoplasmic-facing. Residue T19 is modified to Phosphothreonine. The helical; Signal-anchor for type II membrane protein transmembrane segment at 40 to 60 (MTFLMLAVSLAIPLLGAMMLL) threads the bilayer. Over 61-415 (ESPIDPQSFS…FICRLSLQSI (355 aa)) the chain is Extracellular. The N-linked (GlcNAc...) asparagine glycan is linked to N159.

It belongs to the strictosidine synthase family. In terms of processing, glycosylated in vitro. As to expression, strongly expressed in adipose tissue. Highly expressed in liver, heart, and kidney. Expressed at intermediate level in brain and lung. Weakly expressed in spleen, skeletal muscle and testis.

The protein resides in the membrane. Functionally, exhibits strong arylesterase activity with beta-naphthyl acetate and phenyl acetate. May play a role in adipocyte differentiation. The polypeptide is Adipocyte plasma membrane-associated protein (Apmap) (Mus musculus (Mouse)).